The primary structure comprises 497 residues: Glutamyl-tRNA(Gln) amidotransferase subunit A (497 aa).

Catalysis depends on charge relay system residues Lys91 and Ser166. Residues 143-171 are disordered; that stretch reads SSTENSAYGPTHNPWDLERTAGGSGGGSS. The active-site Acyl-ester intermediate is the Ser190.

This sequence belongs to the amidase family. GatA subfamily. As to quaternary structure, heterotrimer of A, B and C subunits.

The catalysed reaction is L-glutamyl-tRNA(Gln) + L-glutamine + ATP + H2O = L-glutaminyl-tRNA(Gln) + L-glutamate + ADP + phosphate + H(+). Its function is as follows. Allows the formation of correctly charged Gln-tRNA(Gln) through the transamidation of misacylated Glu-tRNA(Gln) in organisms which lack glutaminyl-tRNA synthetase. The reaction takes place in the presence of glutamine and ATP through an activated gamma-phospho-Glu-tRNA(Gln). This Corynebacterium glutamicum (strain ATCC 13032 / DSM 20300 / JCM 1318 / BCRC 11384 / CCUG 27702 / LMG 3730 / NBRC 12168 / NCIMB 10025 / NRRL B-2784 / 534) protein is Glutamyl-tRNA(Gln) amidotransferase subunit A.